The chain runs to 124 residues: Large ribosomal subunit protein bL12 (124 aa).

Belongs to the bacterial ribosomal protein bL12 family. In terms of assembly, homodimer. Part of the ribosomal stalk of the 50S ribosomal subunit. Forms a multimeric L10(L12)X complex, where L10 forms an elongated spine to which 2 to 4 L12 dimers bind in a sequential fashion. Binds GTP-bound translation factors.

Functionally, forms part of the ribosomal stalk which helps the ribosome interact with GTP-bound translation factors. Is thus essential for accurate translation. The chain is Large ribosomal subunit protein bL12 from Allorhizobium ampelinum (strain ATCC BAA-846 / DSM 112012 / S4) (Agrobacterium vitis (strain S4)).